Consider the following 59-residue polypeptide: MRCVPVFIILLLLIPSASSAAVQPKTEKDDVPLASVHDSALRILSRQCCITIPECCRIG.

A signal peptide spans 1-19 (MRCVPVFIILLLLIPSASS). A propeptide spanning residues 20–46 (AAVQPKTEKDDVPLASVHDSALRILSR) is cleaved from the precursor. The residue at position 47 (Gln-47) is a Pyrrolidone carboxylic acid. 2 disulfide bridges follow: Cys-48–Cys-55 and Cys-49–Cys-56. Ile-58 bears the Isoleucine amide mark.

Belongs to the conotoxin T superfamily. As to expression, expressed by the venom duct.

The protein localises to the secreted. The sequence is that of Conotoxin ViVA from Conus virgo (Virgin cone).